The primary structure comprises 179 residues: Ubiquitin-conjugating enzyme E2 C (179 aa).

Residues 1-31 (MASQNRDPVAASVAAARKGAEPSGGAARGPV) form a disordered region. Residue Ala2 is modified to N-acetylalanine. Position 3 is a phosphoserine (Ser3). Positions 30–175 (PVGKRLQQEL…LQETYSKQVS (146 aa)) constitute a UBC core domain. Cys114 serves as the catalytic Glycyl thioester intermediate.

The protein belongs to the ubiquitin-conjugating enzyme family. In terms of assembly, component of the APC/C complex, composed of at least 14 distinct subunits that assemble into a complex of at least 19 chains with a combined molecular mass of around 1.2 MDa. Within this complex, directly interacts with ANAPC2. In terms of processing, autoubiquitinated by the APC/C complex, leading to its degradation by the proteasome. Its degradation plays a central role in APC/C regulation, allowing cyclin-A accumulation before S phase entry. APC/C substrates inhibit the autoubiquitination of UBE2C/UBCH10 but not its E2 function, hence APC/C remaining active until its substrates have been destroyed.

It carries out the reaction S-ubiquitinyl-[E1 ubiquitin-activating enzyme]-L-cysteine + [E2 ubiquitin-conjugating enzyme]-L-cysteine = [E1 ubiquitin-activating enzyme]-L-cysteine + S-ubiquitinyl-[E2 ubiquitin-conjugating enzyme]-L-cysteine.. The enzyme catalyses S-ubiquitinyl-[E1 ubiquitin-activating enzyme]-L-cysteine + [acceptor protein]-L-lysine = [E1 ubiquitin-activating enzyme]-L-cysteine + N(6)-monoubiquitinyl-[acceptor protein]-L-lysine.. It participates in protein modification; protein ubiquitination. In terms of biological role, accepts ubiquitin from the E1 complex and catalyzes its covalent attachment to other proteins. In vitro catalyzes 'Lys-11'- and 'Lys-48'-linked polyubiquitination. Acts as an essential factor of the anaphase promoting complex/cyclosome (APC/C), a cell cycle-regulated ubiquitin ligase that controls progression through mitosis. Acts by initiating 'Lys-11'-linked polyubiquitin chains on APC/C substrates, leading to the degradation of APC/C substrates by the proteasome and promoting mitotic exit. The protein is Ubiquitin-conjugating enzyme E2 C (UBE2C) of Bos taurus (Bovine).